The sequence spans 339 residues: Phenylalanine--tRNA ligase alpha subunit (339 aa).

Glu-254 is a binding site for Mg(2+).

This sequence belongs to the class-II aminoacyl-tRNA synthetase family. Phe-tRNA synthetase alpha subunit type 1 subfamily. Tetramer of two alpha and two beta subunits. Mg(2+) is required as a cofactor.

The protein localises to the cytoplasm. It catalyses the reaction tRNA(Phe) + L-phenylalanine + ATP = L-phenylalanyl-tRNA(Phe) + AMP + diphosphate + H(+). The sequence is that of Phenylalanine--tRNA ligase alpha subunit from Dictyoglomus thermophilum (strain ATCC 35947 / DSM 3960 / H-6-12).